A 519-amino-acid chain; its full sequence is Acetylcholine receptor subunit beta-like 2 (519 aa).

Residues 1-18 (MWHWSLLCVFLLVPLANS) form the signal peptide. The Extracellular portion of the chain corresponds to 19–244 (TAPISFEANP…ITFKLTMRRK (226 aa)). The N-linked (GlcNAc...) asparagine glycan is linked to Asn-50. Cys-154 and Cys-168 are oxidised to a cystine. 3 helical membrane passes run 245–269 (TLFYTVNLIVPCVALTFLTVLVFYL), 277–295 (VTLCISILVSLTVFFLLLA), and 311–332 (YLLFTMILVSLSVWTTVCVLNI). The Cytoplasmic segment spans residues 333-462 (HFRSPSTHNM…WKFVSMVLDR (130 aa)). The helical transmembrane segment at 463–481 (FFLWLFTLSCVFGTLAIIC) threads the bilayer.

The protein belongs to the ligand-gated ion channel (TC 1.A.9) family. Acetylcholine receptor (TC 1.A.9.1) subfamily. As to expression, CNS in embryos.

Its subcellular location is the postsynaptic cell membrane. The protein resides in the cell membrane. Functionally, after binding acetylcholine, the AChR responds by an extensive change in conformation that affects all subunits and leads to opening of an ion-conducting channel across the plasma membrane. This Drosophila melanogaster (Fruit fly) protein is Acetylcholine receptor subunit beta-like 2 (nAChRbeta2).